We begin with the raw amino-acid sequence, 52 residues long: Gastrin/cholecystokinin-like peptide (52 aa).

It belongs to the gastrin/cholecystokinin family.

The protein localises to the secreted. In terms of biological role, may control digestion processes. In Trachemys scripta (Red-eared slider turtle), this protein is Gastrin/cholecystokinin-like peptide.